Here is a 450-residue protein sequence, read N- to C-terminus: 23S rRNA (uracil(1939)-C(5))-methyltransferase RlmD (450 aa).

Residues 1-62 enclose the TRAM domain; sequence MPVAGPLDIV…PSYEQAGVVN (62 aa). [4Fe-4S] cluster-binding residues include Cys-75, Cys-81, Cys-84, and Cys-163. S-adenosyl-L-methionine is bound by residues Gln-271, Phe-300, Asn-305, Glu-321, Asn-349, and Asp-370. Cys-406 acts as the Nucleophile in catalysis.

Belongs to the class I-like SAM-binding methyltransferase superfamily. RNA M5U methyltransferase family. RlmD subfamily.

It catalyses the reaction uridine(1939) in 23S rRNA + S-adenosyl-L-methionine = 5-methyluridine(1939) in 23S rRNA + S-adenosyl-L-homocysteine + H(+). Catalyzes the formation of 5-methyl-uridine at position 1939 (m5U1939) in 23S rRNA. This Ralstonia pickettii (strain 12J) protein is 23S rRNA (uracil(1939)-C(5))-methyltransferase RlmD.